A 525-amino-acid chain; its full sequence is GMP synthase [glutamine-hydrolyzing] (525 aa).

The region spanning 8–206 (PLLILDFGSQ…VVDICKASTD (199 aa)) is the Glutamine amidotransferase type-1 domain. The active-site Nucleophile is the Cys85. Residues His180 and Glu182 contribute to the active site. Residues 207–400 (WTPEHIIDEA…LGLPHDMVYR (194 aa)) enclose the GMPS ATP-PPase domain. 234-240 (SGGVDSS) contacts ATP.

As to quaternary structure, homodimer.

It carries out the reaction XMP + L-glutamine + ATP + H2O = GMP + L-glutamate + AMP + diphosphate + 2 H(+). The protein operates within purine metabolism; GMP biosynthesis; GMP from XMP (L-Gln route): step 1/1. In terms of biological role, catalyzes the synthesis of GMP from XMP. This Legionella pneumophila (strain Paris) protein is GMP synthase [glutamine-hydrolyzing].